A 507-amino-acid polypeptide reads, in one-letter code: ATP synthase subunit alpha, chloroplastic (507 aa).

170-177 (GDRQTGKT) serves as a coordination point for ATP.

Belongs to the ATPase alpha/beta chains family. F-type ATPases have 2 components, CF(1) - the catalytic core - and CF(0) - the membrane proton channel. CF(1) has five subunits: alpha(3), beta(3), gamma(1), delta(1), epsilon(1). CF(0) has four main subunits: a, b, b' and c.

The protein localises to the plastid. It is found in the chloroplast thylakoid membrane. It catalyses the reaction ATP + H2O + 4 H(+)(in) = ADP + phosphate + 5 H(+)(out). In terms of biological role, produces ATP from ADP in the presence of a proton gradient across the membrane. The alpha chain is a regulatory subunit. The chain is ATP synthase subunit alpha, chloroplastic from Cycas taitungensis (Prince sago).